The sequence spans 135 residues: Succinate dehydrogenase assembly factor 3, mitochondrial (135 aa).

Residues 73–101 (KENSNNNDNYNNNNNDNNNDNNNFINIGQ) form a disordered region. Residues 75–95 (NSNNNDNYNNNNNDNNNDNNN) show a composition bias toward low complexity.

It belongs to the complex I LYR family. SDHAF3 subfamily. In terms of assembly, interacts with the iron-sulfur protein subunit within the SDH catalytic dimer.

It localises to the mitochondrion matrix. Plays an essential role in the assembly of succinate dehydrogenase (SDH), an enzyme complex (also referred to as respiratory complex II) that is a component of both the tricarboxylic acid (TCA) cycle and the mitochondrial electron transport chain, and which couples the oxidation of succinate to fumarate with the reduction of ubiquinone (coenzyme Q) to ubiquinol. Promotes maturation of the iron-sulfur protein subunit of the SDH catalytic dimer, protecting it from the deleterious effects of oxidants. May act together with SDHAF1. This chain is Succinate dehydrogenase assembly factor 3, mitochondrial (acn9), found in Dictyostelium discoideum (Social amoeba).